A 334-amino-acid polypeptide reads, in one-letter code: Ketol-acid reductoisomerase (NADP(+)) (334 aa).

A KARI N-terminal Rossmann domain is found at 1–181 (MNRYYDKNAD…GGGRTGILET (181 aa)). Residues 24–27 (YGSQ), arginine 47, serine 50, serine 52, and 82–85 (DEFQ) each bind NADP(+). The active site involves histidine 107. Glycine 133 provides a ligand contact to NADP(+). The KARI C-terminal knotted domain occupies 182-323 (SFKDETETDL…ESLRSMMPWI (142 aa)). 4 residues coordinate Mg(2+): aspartate 190, glutamate 194, glutamate 226, and glutamate 230. A substrate-binding site is contributed by serine 251.

The protein belongs to the ketol-acid reductoisomerase family. It depends on Mg(2+) as a cofactor.

It carries out the reaction (2R)-2,3-dihydroxy-3-methylbutanoate + NADP(+) = (2S)-2-acetolactate + NADPH + H(+). It catalyses the reaction (2R,3R)-2,3-dihydroxy-3-methylpentanoate + NADP(+) = (S)-2-ethyl-2-hydroxy-3-oxobutanoate + NADPH + H(+). Its pathway is amino-acid biosynthesis; L-isoleucine biosynthesis; L-isoleucine from 2-oxobutanoate: step 2/4. The protein operates within amino-acid biosynthesis; L-valine biosynthesis; L-valine from pyruvate: step 2/4. In terms of biological role, involved in the biosynthesis of branched-chain amino acids (BCAA). Catalyzes an alkyl-migration followed by a ketol-acid reduction of (S)-2-acetolactate (S2AL) to yield (R)-2,3-dihydroxy-isovalerate. In the isomerase reaction, S2AL is rearranged via a Mg-dependent methyl migration to produce 3-hydroxy-3-methyl-2-ketobutyrate (HMKB). In the reductase reaction, this 2-ketoacid undergoes a metal-dependent reduction by NADPH to yield (R)-2,3-dihydroxy-isovalerate. The sequence is that of Ketol-acid reductoisomerase (NADP(+)) from Ruthia magnifica subsp. Calyptogena magnifica.